We begin with the raw amino-acid sequence, 265 residues long: MEMO1 family protein Mbar_A1422 (265 aa).

Belongs to the MEMO1 family.

This is MEMO1 family protein Mbar_A1422 from Methanosarcina barkeri (strain Fusaro / DSM 804).